Consider the following 232-residue polypeptide: dTTP/UTP pyrophosphatase (232 aa).

The active-site Proton acceptor is Asp103.

It belongs to the Maf family. YhdE subfamily. A divalent metal cation serves as cofactor.

It localises to the cytoplasm. It catalyses the reaction dTTP + H2O = dTMP + diphosphate + H(+). The catalysed reaction is UTP + H2O = UMP + diphosphate + H(+). The enzyme catalyses 5-methyl-UTP + H2O = 5-methyl-UMP + diphosphate + H(+). It carries out the reaction psi-UTP + H2O = psi-UMP + diphosphate + H(+). Functionally, nucleoside triphosphate pyrophosphatase that hydrolyzes dTTP and UTP. Can also hydrolyze the modified nucleotides 5-methyl-UTP (m(5)UTP) and pseudo-UTP. Has weak activity with CTP. May have a dual role in cell division arrest and in preventing the incorporation of modified nucleotides into cellular nucleic acids. In Saccharomyces cerevisiae (strain ATCC 204508 / S288c) (Baker's yeast), this protein is dTTP/UTP pyrophosphatase.